Consider the following 2058-residue polypeptide: Unconventional myosin-X (2058 aa).

The residue at position 1 (Met-1) is an N-acetylmethionine. Residues 63–739 (EGVDDMASLT…LEQKLEKRRE (677 aa)) enclose the Myosin motor domain. Residues Asn-104, Tyr-113, 160–165 (GAGKTE), and Asn-215 contribute to the ATP site. An actin-binding region spans residues 619–641 (LHSLMATLSSSNPFFVRCIKPNM). IQ domains are found at residues 742–763 (VSHAAMVIRAHVLGFLARKQYR), 764–787 (KVLYCVVIIQKNYRAFLLRRRFLH), and 788–817 (LKKAAIVFQKQLRGQIARRVYRQLLAEKRE). Positions 814–883 (EKREQEEKKK…LTRELEKQKE (70 aa)) are SAH. Disordered stretches follow at residues 819–840 (EEKKKQEEEEKKKREEEERERE) and 847–866 (ELRAQQEEETRKQQELEALQ). The segment covering 847–861 (ELRAQQEEETRKQQE) has biased composition (basic and acidic residues). Positions 884–934 (NKQVEEILRLEKEIEDLQRMKEQQELSLTEASLQKLQERRDQELRRLEEEA) form a coiled coil. Phosphoserine occurs at positions 962, 965, and 968. The segment at 964 to 1090 (GSEFSSELAE…DLPSPDGDYD (127 aa)) is disordered. Residues 989 to 1003 (PEEEVDEGFEADDDA) show a composition bias toward acidic residues. A compositionally biased stretch (polar residues) spans 1040 to 1049 (VVPTSPSADS). The span at 1060-1071 (SGSLHNSSSGES) shows a compositional bias: low complexity. Phosphothreonine is present on Thr-1158. 2 PH domains span residues 1212–1310 (EALK…QVHA) and 1392–1497 (EFIV…NVTD). The 149-residue stretch at 1547-1695 (LPYGDINLNL…PSRDEIEALI (149 aa)) folds into the MyTH4 domain. The FERM domain maps to 1700–2044 (MTSTVYCHGG…AYISMIVKKR (345 aa)).

The protein belongs to the TRAFAC class myosin-kinesin ATPase superfamily. Myosin family. In terms of assembly, monomer, when in an inactive conformation in the cytosol. Homodimer in its active, membrane-bound conformation; antiparallel coiled coil-mediated dimer formation. Interacts strongly with CALM3 and weakly with CALM, the CALM3 interaction is essential for function in filopodial extension and motility. Interacts with ECPAS. Interacts with NEO1. Interacts with ITGB1 and ITGB3. Interacts with VASP. Interacts with DCC and ITGB5; the presence of DCC inhibits ITGB5 binding. Interacts with tubulin; ITGB5 or DCC binding inhibits tubulin binding. The initiator methionine for isoform Headless is removed. As to expression, ubiquitous.

The protein resides in the cytoplasm. The protein localises to the cytosol. Its subcellular location is the cell projection. It localises to the lamellipodium. It is found in the ruffle. The protein resides in the cytoskeleton. The protein localises to the filopodium tip. Its subcellular location is the cell cortex. It localises to the filopodium membrane. Myosins are actin-based motor molecules with ATPase activity. Unconventional myosins serve in intracellular movements. MYO10 binds to actin filaments and actin bundles and functions as a plus end-directed motor. Moves with higher velocity and takes larger steps on actin bundles than on single actin filaments. The tail domain binds to membranous compartments containing phosphatidylinositol 3,4,5-trisphosphate or integrins, and mediates cargo transport along actin filaments. Regulates cell shape, cell spreading and cell adhesion. Stimulates the formation and elongation of filopodia. In hippocampal neurons it induces the formation of dendritic filopodia by trafficking the actin-remodeling protein VASP to the tips of filopodia, where it promotes actin elongation. Plays a role in formation of the podosome belt in osteoclasts. Its function is as follows. Functions as a dominant-negative regulator of isoform 1, suppressing its filopodia-inducing and axon outgrowth-promoting activities. In hippocampal neurons, it increases VASP retention in spine heads to induce spine formation and spine head expansion. The sequence is that of Unconventional myosin-X (MYO10) from Homo sapiens (Human).